A 349-amino-acid chain; its full sequence is Anaerobic nitrite reductase Glb1-3 (349 aa).

Globin domains are found at residues 13–162 (GFTE…AEMK) and 184–333 (CFTE…AEMK). Heme b is bound by residues serine 56, lysine 70, histidine 74, lysine 104, threonine 108, histidine 109, serine 227, lysine 241, histidine 245, lysine 275, threonine 279, and histidine 280.

This sequence belongs to the plant globin family. As to quaternary structure, monomer. The cofactor is heme b.

The protein resides in the cytoplasm. Its subcellular location is the nucleus. The catalysed reaction is Fe(III)-heme b-[protein] + nitric oxide + H2O = Fe(II)-heme b-[protein] + nitrite + 2 H(+). Functionally, phytoglobin that regulates the fine tuning of nitric oxide (NO) concentration in the cytosol in response to sudden changes in O(2) availability, and performs both symbiotic and nonsymbiotic functions. Exhibits NO dioxygenase activity in the presence of O(2) but nitrite reductase (NiR) activity in the absence of O(2) (e.g. during flooding or in waterlogged soil). May not function as an oxygen storage or transport protein. Extremely reactive toward the physiological ligands O(2), nitric oxide (NO), and nitrite with a very high affinity for O(2) through an hexacoordinate heme iron because of a very low dissociation constant. The sequence is that of Anaerobic nitrite reductase Glb1-3 from Medicago truncatula (Barrel medic).